We begin with the raw amino-acid sequence, 129 residues long: Small ribosomal subunit protein uS11 (129 aa).

The protein belongs to the universal ribosomal protein uS11 family. Part of the 30S ribosomal subunit. Interacts with proteins S7 and S18. Binds to IF-3.

In terms of biological role, located on the platform of the 30S subunit, it bridges several disparate RNA helices of the 16S rRNA. Forms part of the Shine-Dalgarno cleft in the 70S ribosome. This Roseobacter denitrificans (strain ATCC 33942 / OCh 114) (Erythrobacter sp. (strain OCh 114)) protein is Small ribosomal subunit protein uS11.